Consider the following 690-residue polypeptide: Heterogeneous nuclear ribonucleoprotein M (690 aa).

The span at 1–13 shows a compositional bias: low complexity; the sequence is MAAGVEAAAEVAA. Residues 1-63 form a disordered region; it reads MAAGVEAAAE…KRGGNRFEPY (63 aa). The residue at position 2 (alanine 2) is an N-acetylalanine. Residue lysine 17 forms a Glycyl lysine isopeptide (Lys-Gly) (interchain with G-Cter in SUMO2) linkage. Serine 29 is subject to Phosphoserine. Residues lysine 37, lysine 68, and lysine 82 each participate in a glycyl lysine isopeptide (Lys-Gly) (interchain with G-Cter in SUMO2) cross-link. Positions 37–49 are enriched in basic and acidic residues; it reads KGEERPTQNEKRK. 2 consecutive RRM domains span residues 70 to 148 and 164 to 241; these read YRAF…EDPD and STVF…MDER. At serine 85 the chain carries Phosphoserine. Glycyl lysine isopeptide (Lys-Gly) (interchain with G-Cter in SUMO2) cross-links involve residues lysine 87 and lysine 126. Lysine 133 carries the post-translational modification N6-acetyllysine; alternate. Residue lysine 133 forms a Glycyl lysine isopeptide (Lys-Gly) (interchain with G-Cter in SUMO2); alternate linkage. Residues lysine 142 and lysine 144 each participate in a glycyl lysine isopeptide (Lys-Gly) (interchain with G-Cter in SUMO2) cross-link. A Phosphoserine modification is found at serine 164. A Glycyl lysine isopeptide (Lys-Gly) (interchain with G-Cter in SUMO2) cross-link involves residue lysine 181. Position 237 is an N6-acetyllysine; alternate (lysine 237). Lysine 237 is covalently cross-linked (Glycyl lysine isopeptide (Lys-Gly) (interchain with G-Cter in SUMO2); alternate). Glycyl lysine isopeptide (Lys-Gly) (interchain with G-Cter in SUMO2) cross-links involve residues lysine 245 and lysine 305. Phosphoserine occurs at positions 325 and 337. Glycyl lysine isopeptide (Lys-Gly) (interchain with G-Cter in SUMO2) cross-links involve residues lysine 341 and lysine 348. Phosphoserine is present on serine 357. Repeat copies occupy residues 360-365, 367-372, 375-380, and 386-391. The interval 360-568 is 27 X 6 AA repeats of [GEVSTPAN]-[ILMV]-[DE]-[RH]-[MLVI]-[GAV]; it reads GIERMGPGID…ALGAGIERMG (209 aa). Serine 392 carries the phosphoserine modification. Tandem repeats lie at residues 393-398, 400-405, and 406-411. The residue at position 412 (serine 412) is a Phosphoserine. Repeat copies occupy residues 413-418, 421-426, 428-433, and 435-440. Serine 428 bears the Phosphoserine mark. Serine 441 is modified (phosphoserine). 16 consecutive repeat copies span residues 442 to 447, 453 to 458, 460 to 465, 467 to 472, 474 to 479, 481 to 486, 488 to 493, 500 to 505, 507 to 512, 514 to 519, 522 to 527, 528 to 532, 535 to 540, 541 to 545, 548 to 553, and 563 to 568. Arginine 456 carries the post-translational modification Omega-N-methylarginine. A Phosphoserine modification is found at serine 488. Serine 535 bears the Phosphoserine mark. Serine 548 carries the post-translational modification Phosphoserine. A phosphoserine mark is found at serine 578, serine 593, and serine 597. Lysine 611 is covalently cross-linked (Glycyl lysine isopeptide (Lys-Gly) (interchain with G-Cter in SUMO2)). The RRM 3 domain occupies 613–689; the sequence is CQIFVRNLPF…REIDVRIDRN (77 aa). At threonine 625 the chain carries Phosphothreonine. Residue lysine 627 forms a Glycyl lysine isopeptide (Lys-Gly) (interchain with G-Cter in SUMO2) linkage. Lysine 632 carries the N6-acetyllysine modification. Residues lysine 645 and lysine 652 each participate in a glycyl lysine isopeptide (Lys-Gly) (interchain with G-Cter in SUMO2) cross-link. Lysine 658 bears the N6-acetyllysine; alternate mark. Residue lysine 658 forms a Glycyl lysine isopeptide (Lys-Gly) (interchain with G-Cter in SUMO2); alternate linkage. Lysine 658 participates in a covalent cross-link: Glycyl lysine isopeptide (Lys-Gly) (interchain with G-Cter in SUMO1); alternate. Serine 661 bears the Phosphoserine mark. Residue lysine 676 forms a Glycyl lysine isopeptide (Lys-Gly) (interchain with G-Cter in SUMO2) linkage.

In terms of assembly, identified in the spliceosome C complex. Interacts with PPIA/CYPA. In terms of processing, sumoylated. As to expression, expressed in all tissues tested, including liver, heart, lung, skeletal muscle, kidney, stomach, large intestine, small intestine, pancreas, spleen, peritoneal macrophage and thyroid.

It is found in the nucleus matrix. In terms of biological role, pre-mRNA binding protein, binds avidly to poly(G) and poly(U) RNA homopolymers. Involved in splicing. Acts as a receptor for carcinoembryonic antigen in Kupffer cells, may initiate a series of signaling events leading to tyrosine phosphorylation of proteins and induction of IL-1 alpha, IL-6, IL-10 and tumor necrosis factor alpha cytokines. The protein is Heterogeneous nuclear ribonucleoprotein M (Hnrnpm) of Rattus norvegicus (Rat).